The following is a 164-amino-acid chain: MMKTSAIHFPFQAPNTISLVAGTGDAKNPLNAFDMALLSSGIGNLNLIRISSIMPPKAEIIPLPKIPQGSLVPTAYGYEISKIKGETVAAGISVAIPKDKELCGLIMEYECVGSKKECEDTVREMAKDGFEMRGWEIDEIISIASEQTVENIGCAFAAAALWYK.

Pyruvic acid (Ser) is present on Ser-52.

The protein belongs to the PdaD family. The cofactor is pyruvate.

It carries out the reaction L-arginine + H(+) = agmatine + CO2. The chain is Pyruvoyl-dependent arginine decarboxylase from Methanococcus vannielii (strain ATCC 35089 / DSM 1224 / JCM 13029 / OCM 148 / SB).